A 192-amino-acid polypeptide reads, in one-letter code: NADH-quinone oxidoreductase subunit B (192 aa).

Cys-71, Cys-72, Cys-136, and Cys-166 together coordinate [4Fe-4S] cluster.

It belongs to the complex I 20 kDa subunit family. NDH-1 is composed of 14 different subunits. Subunits NuoB, C, D, E, F, and G constitute the peripheral sector of the complex. Requires [4Fe-4S] cluster as cofactor.

It is found in the cell inner membrane. The enzyme catalyses a quinone + NADH + 5 H(+)(in) = a quinol + NAD(+) + 4 H(+)(out). NDH-1 shuttles electrons from NADH, via FMN and iron-sulfur (Fe-S) centers, to quinones in the respiratory chain. The immediate electron acceptor for the enzyme in this species is believed to be ubiquinone. Couples the redox reaction to proton translocation (for every two electrons transferred, four hydrogen ions are translocated across the cytoplasmic membrane), and thus conserves the redox energy in a proton gradient. This Sinorhizobium medicae (strain WSM419) (Ensifer medicae) protein is NADH-quinone oxidoreductase subunit B.